Reading from the N-terminus, the 430-residue chain is Enolase (430 aa).

Residue Gln163 participates in (2R)-2-phosphoglycerate binding. The active-site Proton donor is the Glu205. Residues Asp242, Glu288, and Asp315 each contribute to the Mg(2+) site. Lys340, Arg369, Ser370, and Lys391 together coordinate (2R)-2-phosphoglycerate. Lys340 functions as the Proton acceptor in the catalytic mechanism.

Belongs to the enolase family. Mg(2+) serves as cofactor.

It is found in the cytoplasm. It localises to the secreted. The protein resides in the cell surface. The enzyme catalyses (2R)-2-phosphoglycerate = phosphoenolpyruvate + H2O. It functions in the pathway carbohydrate degradation; glycolysis; pyruvate from D-glyceraldehyde 3-phosphate: step 4/5. Catalyzes the reversible conversion of 2-phosphoglycerate (2-PG) into phosphoenolpyruvate (PEP). It is essential for the degradation of carbohydrates via glycolysis. In Acidobacterium capsulatum (strain ATCC 51196 / DSM 11244 / BCRC 80197 / JCM 7670 / NBRC 15755 / NCIMB 13165 / 161), this protein is Enolase.